The sequence spans 429 residues: UDP-N-acetylglucosamine 1-carboxyvinyltransferase (429 aa).

Residue 22-23 (KN) participates in phosphoenolpyruvate binding. Arg-102 contacts UDP-N-acetyl-alpha-D-glucosamine. Cys-126 (proton donor) is an active-site residue. The residue at position 126 (Cys-126) is a 2-(S-cysteinyl)pyruvic acid O-phosphothioketal. Residues 131–135 (RPVDL), Asp-316, and Ile-338 contribute to the UDP-N-acetyl-alpha-D-glucosamine site.

Belongs to the EPSP synthase family. MurA subfamily.

The protein resides in the cytoplasm. The enzyme catalyses phosphoenolpyruvate + UDP-N-acetyl-alpha-D-glucosamine = UDP-N-acetyl-3-O-(1-carboxyvinyl)-alpha-D-glucosamine + phosphate. Its pathway is cell wall biogenesis; peptidoglycan biosynthesis. Functionally, cell wall formation. Adds enolpyruvyl to UDP-N-acetylglucosamine. The polypeptide is UDP-N-acetylglucosamine 1-carboxyvinyltransferase (Rhodopseudomonas palustris (strain BisB5)).